Here is a 150-residue protein sequence, read N- to C-terminus: Globin (150 aa).

Residues 11 to 150 form the Globin domain; sequence PLSAAEKTKI…MICILLRSAY (140 aa). Heme b contacts are provided by histidine 74 and histidine 106.

This sequence belongs to the globin family. In terms of assembly, monomer.

This Lampetra fluviatilis (European river lamprey) protein is Globin.